The following is a 329-amino-acid chain: Phospho-N-acetylmuramoyl-pentapeptide-transferase (329 aa).

The next 9 membrane-spanning stretches (helical) occupy residues 1–21 (MLLN…IGIP), 53–73 (MGGF…ALVF), 76–96 (FSPA…IGFL), 109–129 (GLTA…SYFI), 141–161 (ILSW…IWLV), 175–195 (GLAS…AVVH), 198–218 (YDVL…FVFN), 237–257 (FLAI…IGAV), and 309–329 (IVFW…YFAF).

This sequence belongs to the glycosyltransferase 4 family. MraY subfamily. Mg(2+) is required as a cofactor.

Its subcellular location is the cell membrane. The enzyme catalyses UDP-N-acetyl-alpha-D-muramoyl-L-alanyl-gamma-D-glutamyl-L-lysyl-D-alanyl-D-alanine + di-trans,octa-cis-undecaprenyl phosphate = Mur2Ac(oyl-L-Ala-gamma-D-Glu-L-Lys-D-Ala-D-Ala)-di-trans,octa-cis-undecaprenyl diphosphate + UMP. The protein operates within cell wall biogenesis; peptidoglycan biosynthesis. Catalyzes the initial step of the lipid cycle reactions in the biosynthesis of the cell wall peptidoglycan: transfers peptidoglycan precursor phospho-MurNAc-pentapeptide from UDP-MurNAc-pentapeptide onto the lipid carrier undecaprenyl phosphate, yielding undecaprenyl-pyrophosphoryl-MurNAc-pentapeptide, known as lipid I. The sequence is that of Phospho-N-acetylmuramoyl-pentapeptide-transferase from Lactococcus lactis subsp. cremoris (strain SK11).